The following is a 124-amino-acid chain: MTNVLLVALGGSIGAVLRYLLSIFMIQVFGSSFPFGTLLVNLLGSFLMGAVYALGQLSHISPEIKALIGIGLLGALTTFSTFSNETLLLLQEGLWHKAILNVLLNVTLCLFMVYLGQQLIFSRV.

3 helical membrane-spanning segments follow: residues 20-40 (LLSI…TLLV), 60-80 (ISPE…TTFS), and 102-122 (VLLN…LIFS). The Na(+) site is built by Gly-74 and Thr-77.

The protein belongs to the fluoride channel Fluc/FEX (TC 1.A.43) family.

The protein localises to the cell inner membrane. The catalysed reaction is fluoride(in) = fluoride(out). With respect to regulation, na(+) is not transported, but it plays an essential structural role and its presence is essential for fluoride channel function. In terms of biological role, fluoride-specific ion channel. Important for reducing fluoride concentration in the cell, thus reducing its toxicity. The protein is Fluoride-specific ion channel FluC of Shewanella frigidimarina (strain NCIMB 400).